The sequence spans 255 residues: Increased copper sensitivity protein 2 (255 aa).

Over residues 1–12 (MGKFEQKERERI) the composition is skewed to basic and acidic residues. Disordered stretches follow at residues 1–32 (MGKFEQKERERISTFSFPTTGSQSSTSIKSLG) and 82–142 (PGDK…RKSH). Residues 13 to 30 (STFSFPTTGSQSSTSIKS) show a composition bias toward polar residues. The span at 131 to 142 (SGRRKSYHRKSH) shows a compositional bias: basic residues. Serine 217 is modified (phosphoserine).

This is Increased copper sensitivity protein 2 (ICS2) from Saccharomyces cerevisiae (strain ATCC 204508 / S288c) (Baker's yeast).